An 89-amino-acid chain; its full sequence is Small ribosomal subunit protein uS17 (89 aa).

Belongs to the universal ribosomal protein uS17 family. As to quaternary structure, part of the 30S ribosomal subunit.

Functionally, one of the primary rRNA binding proteins, it binds specifically to the 5'-end of 16S ribosomal RNA. In Novosphingobium aromaticivorans (strain ATCC 700278 / DSM 12444 / CCUG 56034 / CIP 105152 / NBRC 16084 / F199), this protein is Small ribosomal subunit protein uS17.